Reading from the N-terminus, the 282-residue chain is Ribosomal RNA small subunit methyltransferase A (282 aa).

6 residues coordinate S-adenosyl-L-methionine: His-11, Leu-13, Gly-44, Glu-65, Asp-90, and Asn-106.

Belongs to the class I-like SAM-binding methyltransferase superfamily. rRNA adenine N(6)-methyltransferase family. RsmA subfamily.

It localises to the cytoplasm. The catalysed reaction is adenosine(1518)/adenosine(1519) in 16S rRNA + 4 S-adenosyl-L-methionine = N(6)-dimethyladenosine(1518)/N(6)-dimethyladenosine(1519) in 16S rRNA + 4 S-adenosyl-L-homocysteine + 4 H(+). Specifically dimethylates two adjacent adenosines (A1518 and A1519) in the loop of a conserved hairpin near the 3'-end of 16S rRNA in the 30S particle. May play a critical role in biogenesis of 30S subunits. This Synechococcus sp. (strain JA-2-3B'a(2-13)) (Cyanobacteria bacterium Yellowstone B-Prime) protein is Ribosomal RNA small subunit methyltransferase A.